A 530-amino-acid chain; its full sequence is 2,3-bisphosphoglycerate-independent phosphoglycerate mutase (530 aa).

Mn(2+)-binding residues include Asp-15 and Ser-65. The Phosphoserine intermediate role is filled by Ser-65. Substrate-binding positions include His-126, 155-156 (RD), Arg-187, Arg-193, 257-260 (RPDR), and Lys-330. Mn(2+)-binding residues include Asp-397, His-401, Asp-438, His-439, and His-456.

This sequence belongs to the BPG-independent phosphoglycerate mutase family. As to quaternary structure, monomer. It depends on Mn(2+) as a cofactor.

The enzyme catalyses (2R)-2-phosphoglycerate = (2R)-3-phosphoglycerate. It participates in carbohydrate degradation; glycolysis; pyruvate from D-glyceraldehyde 3-phosphate: step 3/5. Functionally, catalyzes the interconversion of 2-phosphoglycerate and 3-phosphoglycerate. This Synechococcus sp. (strain JA-3-3Ab) (Cyanobacteria bacterium Yellowstone A-Prime) protein is 2,3-bisphosphoglycerate-independent phosphoglycerate mutase.